Reading from the N-terminus, the 141-residue chain is HTH-type transcriptional repressor NsrR (141 aa).

The 128-residue stretch at 2–129 (QLTSFTDYAL…DDCSIAELLD (128 aa)) folds into the HTH rrf2-type domain. Positions 28-51 (ITDVTELFGVSRNHMVKVINRLGQ) form a DNA-binding region, H-T-H motif. [2Fe-2S] cluster contacts are provided by Cys-91, Cys-96, and Cys-102.

[2Fe-2S] cluster serves as cofactor.

Its function is as follows. Nitric oxide-sensitive repressor of genes involved in protecting the cell against nitrosative stress. May require iron for activity. This chain is HTH-type transcriptional repressor NsrR, found in Vibrio vulnificus (strain CMCP6).